A 299-amino-acid polypeptide reads, in one-letter code: Acetaldehyde dehydrogenase (299 aa).

11–14 (SGNI) is a binding site for NAD(+). The Acyl-thioester intermediate role is filled by Cys126. Residues 157 to 165 (SAGPGTRAN) and Asn267 each bind NAD(+).

The protein belongs to the acetaldehyde dehydrogenase family.

The catalysed reaction is acetaldehyde + NAD(+) + CoA = acetyl-CoA + NADH + H(+). This chain is Acetaldehyde dehydrogenase, found in Bacillus cereus (strain ATCC 10987 / NRS 248).